Here is a 418-residue protein sequence, read N- to C-terminus: Glutamyl-tRNA reductase (418 aa).

Residues 49 to 52 (TCNR), serine 109, 114 to 116 (EPQ), and glutamine 120 contribute to the substrate site. The Nucleophile role is filled by cysteine 50. Position 189 to 194 (189 to 194 (GAGETI)) interacts with NADP(+).

Belongs to the glutamyl-tRNA reductase family. As to quaternary structure, homodimer.

The catalysed reaction is (S)-4-amino-5-oxopentanoate + tRNA(Glu) + NADP(+) = L-glutamyl-tRNA(Glu) + NADPH + H(+). It functions in the pathway porphyrin-containing compound metabolism; protoporphyrin-IX biosynthesis; 5-aminolevulinate from L-glutamyl-tRNA(Glu): step 1/2. In terms of biological role, catalyzes the NADPH-dependent reduction of glutamyl-tRNA(Glu) to glutamate 1-semialdehyde (GSA). This Escherichia coli O139:H28 (strain E24377A / ETEC) protein is Glutamyl-tRNA reductase.